Reading from the N-terminus, the 154-residue chain is MGLSDGEWQLVLNVWGKVEADLAGHGQEVLIRLFKGHPETLEKFDKFKHLKSEDEMKGSEDLKKHGNTVLTALGGILKKKGKHEAELKPLAQSHATKHKIPIKYLEFISEAIIQVLQSKHPGDFGADAQGAMKRALELFRNDIAAKYKELGFQG.

In terms of domain architecture, Globin spans 2–148 (GLSDGEWQLV…FRNDIAAKYK (147 aa)). Position 4 is a phosphoserine (S4). H65 is a nitrite binding site. H65 is an O2 binding site. Phosphothreonine is present on T68. Residue H94 coordinates heme b.

It belongs to the globin family. As to quaternary structure, monomeric.

The protein localises to the cytoplasm. It localises to the sarcoplasm. The catalysed reaction is Fe(III)-heme b-[protein] + nitric oxide + H2O = Fe(II)-heme b-[protein] + nitrite + 2 H(+). It carries out the reaction H2O2 + AH2 = A + 2 H2O. In terms of biological role, monomeric heme protein which primary function is to store oxygen and facilitate its diffusion within muscle tissues. Reversibly binds oxygen through a pentacoordinated heme iron and enables its timely and efficient release as needed during periods of heightened demand. Depending on the oxidative conditions of tissues and cells, and in addition to its ability to bind oxygen, it also has a nitrite reductase activity whereby it regulates the production of bioactive nitric oxide. Under stress conditions, like hypoxia and anoxia, it also protects cells against reactive oxygen species thanks to its pseudoperoxidase activity. The chain is Myoglobin (MB) from Lutra lutra (European river otter).